The chain runs to 577 residues: Arginine--tRNA ligase (577 aa).

Positions 122–132 match the 'HIGH' region motif; it reads PNVAKEMHVGH.

This sequence belongs to the class-I aminoacyl-tRNA synthetase family. In terms of assembly, monomer.

It is found in the cytoplasm. It catalyses the reaction tRNA(Arg) + L-arginine + ATP = L-arginyl-tRNA(Arg) + AMP + diphosphate. This chain is Arginine--tRNA ligase, found in Vibrio campbellii (strain ATCC BAA-1116).